The primary structure comprises 275 residues: 3-methyl-2-oxobutanoate hydroxymethyltransferase (275 aa).

Positions 44 and 83 each coordinate Mg(2+). Residues 44-45 (DS), Asp-83, and Lys-113 each bind 3-methyl-2-oxobutanoate. Residue Glu-115 participates in Mg(2+) binding. Catalysis depends on Glu-182, which acts as the Proton acceptor.

Belongs to the PanB family. Homodecamer; pentamer of dimers. Mg(2+) serves as cofactor.

The protein resides in the cytoplasm. The catalysed reaction is 3-methyl-2-oxobutanoate + (6R)-5,10-methylene-5,6,7,8-tetrahydrofolate + H2O = 2-dehydropantoate + (6S)-5,6,7,8-tetrahydrofolate. The protein operates within cofactor biosynthesis; (R)-pantothenate biosynthesis; (R)-pantoate from 3-methyl-2-oxobutanoate: step 1/2. Functionally, catalyzes the reversible reaction in which hydroxymethyl group from 5,10-methylenetetrahydrofolate is transferred onto alpha-ketoisovalerate to form ketopantoate. The sequence is that of 3-methyl-2-oxobutanoate hydroxymethyltransferase from Clostridium novyi (strain NT).